A 235-amino-acid chain; its full sequence is Large ribosomal subunit protein uL1 (235 aa).

It belongs to the universal ribosomal protein uL1 family. Part of the 50S ribosomal subunit.

Its function is as follows. Binds directly to 23S rRNA. The L1 stalk is quite mobile in the ribosome, and is involved in E site tRNA release. Protein L1 is also a translational repressor protein, it controls the translation of the L11 operon by binding to its mRNA. The chain is Large ribosomal subunit protein uL1 from Methylobacterium nodulans (strain LMG 21967 / CNCM I-2342 / ORS 2060).